We begin with the raw amino-acid sequence, 422 residues long: Enolase (422 aa).

Gln162 is a (2R)-2-phosphoglycerate binding site. Glu204 serves as the catalytic Proton donor. Mg(2+) contacts are provided by Asp241, Glu284, and Asp311. 4 residues coordinate (2R)-2-phosphoglycerate: Lys336, Arg365, Ser366, and Lys387. Lys336 serves as the catalytic Proton acceptor.

It belongs to the enolase family. The cofactor is Mg(2+).

The protein localises to the cytoplasm. It localises to the secreted. The protein resides in the cell surface. The catalysed reaction is (2R)-2-phosphoglycerate = phosphoenolpyruvate + H2O. Its pathway is carbohydrate degradation; glycolysis; pyruvate from D-glyceraldehyde 3-phosphate: step 4/5. Catalyzes the reversible conversion of 2-phosphoglycerate (2-PG) into phosphoenolpyruvate (PEP). It is essential for the degradation of carbohydrates via glycolysis. This is Enolase from Bartonella quintana (strain Toulouse) (Rochalimaea quintana).